A 482-amino-acid chain; its full sequence is MAVAAAAAARRRDVSCLLLLLCFSSSMAATGGGGGGGEQEADRVARLPGQPASPAVSQFAGYVGVDERHGRALFYWFFEAQASPAPEKKPLLLWLNGGPGCSSIGYGAASELGPLRVARQGAALEFNQYGWNKEANLLFLESPVGVGFSYTNTSSDLSNLNDDFVAEDAYSFLVNWFKRFPQYKDNEFYISGESYAGHYVPQLADLVYERNKDKRASTYINLKGFIVGNPLTDDYYDSKGLAEYAWSHAIVSDQVYERIKKTCNFKNSNWTDDCNAAMNIIFSQYNQIDIYNIYAPKCLLNSTSASSPDRAFFANNQEQFRWRIKMFSGYDPCYSSYAEDYFNKHDVQEAFHANASGLLPGKWQVCSDQILNSYNFSVLSILPIYSKLIKAGLRVWLYSGDADGRVPVISSRYCVEALGLPIKTDWQSWYLDKQVAGRFVEYHGMTMVTVRGAGHLVPLNKPAEGLMLINAFLHGEKLPTSR.

The signal sequence occupies residues 1–28 (MAVAAAAAARRRDVSCLLLLLCFSSSMA). Disulfide bonds link C101-C366, C263-C274, and C298-C333. The N-linked (GlcNAc...) asparagine glycan is linked to N152. S194 is a catalytic residue. N-linked (GlcNAc...) asparagine glycosylation is found at N269, N301, N354, and N375. Active-site residues include D403 and H455.

Belongs to the peptidase S10 family.

The protein resides in the secreted. Functionally, acts as a positive regulator of grain size by controlling grain width, filling and weight. High expression of GS5 in the grain is correlated with large grain size. The protein is Serine carboxypeptidase-like 26 of Oryza sativa subsp. japonica (Rice).